Consider the following 362-residue polypeptide: 2-aminoethylphosphonate--pyruvate transaminase (362 aa).

Lysine 193 carries the post-translational modification N6-(pyridoxal phosphate)lysine.

Belongs to the class-V pyridoxal-phosphate-dependent aminotransferase family. PhnW subfamily. In terms of assembly, homodimer. Pyridoxal 5'-phosphate serves as cofactor.

The catalysed reaction is (2-aminoethyl)phosphonate + pyruvate = phosphonoacetaldehyde + L-alanine. Involved in phosphonate degradation. This is 2-aminoethylphosphonate--pyruvate transaminase from Bacteroides fragilis (strain ATCC 25285 / DSM 2151 / CCUG 4856 / JCM 11019 / LMG 10263 / NCTC 9343 / Onslow / VPI 2553 / EN-2).